The sequence spans 577 residues: Protein hinderin (577 aa).

A Phosphoserine modification is found at Ser-21. Residues 91–167 are a coiled coil; the sequence is LKDLCLEDKR…CQELLSLYQK (77 aa). Ser-179 carries the post-translational modification Phosphoserine. The tract at residues 251–282 is disordered; sequence TLHHPKDDLDKIPSETTTCNCESPGRKPAVPT. The segment covering 254-263 has biased composition (basic and acidic residues); the sequence is HPKDDLDKIP. Residues 358-402 are a coiled coil; the sequence is LKKQISEDRKQQLMLQKMELEIEKERLQHLLAQQETKLLLKQQQL. Disordered stretches follow at residues 425–444, 449–492, and 520–540; these read SSSIKKHQDPPNSGENRKER, FHSH…GSLK, and LSPNSAPKPQRYPSREAGAWN. Over residues 449 to 468 the composition is skewed to basic and acidic residues; it reads FHSHMKDDAQWSCQKKDTCR. 2 positions are modified to phosphoserine: Ser-490 and Ser-521.

In terms of assembly, interacts (via N- and C-terminal domains) with SMC3 (via central hinge region). Widely expressed.

Functionally, competes with SMC1 for binding to SMC3. May affect the availability of SMC3 to engage in the formation of multimeric protein complexes. This chain is Protein hinderin (KIAA1328), found in Homo sapiens (Human).